The sequence spans 346 residues: MNPLILTIILMTVFLGTMIVMASSHWLMIWIGFEMNLLAIIPILMKKYNPRAMEASTKYFLTQATASMLLMMAIIINLMHSGQWTITKVFNPTASIIMTLALAMKLGLTPFHFWVPEVTQGISLTSGLILLTWQKLAPMSILYQISPSINLNILLTMAVLSILVGGWGGLNQTQLRKIMAYSSIAHMGWMAAILVYNPTLTMLNMLIYIMMTLTMFMLFIHSSSTTTLSLSHTWNKAPLITTLILITLLSMGGLPPLSGFMPKWMIIQELTKNSSIILPTLMAIMALLNLYFYMRLTYSTSLTMFPSTNNMKMKWQFETKQITLLPPLIIASSLLLPLTPMLSILD.

11 helical membrane passes run 3-23 (PLIL…VMAS), 25-45 (HWLM…PILM), 59-79 (YFLT…INLM), 96-116 (IIMT…FWVP), 122-142 (ISLT…MSIL), 149-169 (INLN…GWGG), 178-198 (IMAY…VYNP), 200-220 (LTML…MLFI), 237-257 (APLI…LPPL), 274-294 (SSII…YFYM), and 322-342 (ITLL…TPML).

Belongs to the complex I subunit 2 family. In terms of assembly, core subunit of respiratory chain NADH dehydrogenase (Complex I) which is composed of 45 different subunits. Interacts with TMEM242.

The protein resides in the mitochondrion inner membrane. The catalysed reaction is a ubiquinone + NADH + 5 H(+)(in) = a ubiquinol + NAD(+) + 4 H(+)(out). In terms of biological role, core subunit of the mitochondrial membrane respiratory chain NADH dehydrogenase (Complex I) which catalyzes electron transfer from NADH through the respiratory chain, using ubiquinone as an electron acceptor. Essential for the catalytic activity and assembly of complex I. The sequence is that of NADH-ubiquinone oxidoreductase chain 2 from Equus asinus (Donkey).